The following is a 412-amino-acid chain: Peptidase T (412 aa).

Histidine 84 lines the Zn(2+) pocket. Aspartate 86 is a catalytic residue. Aspartate 146 lines the Zn(2+) pocket. The active-site Proton acceptor is the glutamate 179. Residues glutamate 180, aspartate 202, and histidine 385 each coordinate Zn(2+).

Belongs to the peptidase M20B family. The cofactor is Zn(2+).

The protein resides in the cytoplasm. The catalysed reaction is Release of the N-terminal residue from a tripeptide.. Its function is as follows. Cleaves the N-terminal amino acid of tripeptides. The protein is Peptidase T of Haemophilus influenzae (strain PittEE).